Consider the following 101-residue polypeptide: Small ribosomal subunit protein uS14 (101 aa).

The protein belongs to the universal ribosomal protein uS14 family. As to quaternary structure, part of the 30S ribosomal subunit. Contacts proteins S3 and S10.

Its function is as follows. Binds 16S rRNA, required for the assembly of 30S particles and may also be responsible for determining the conformation of the 16S rRNA at the A site. This is Small ribosomal subunit protein uS14 from Aromatoleum aromaticum (strain DSM 19018 / LMG 30748 / EbN1) (Azoarcus sp. (strain EbN1)).